Here is a 244-residue protein sequence, read N- to C-terminus: Phosphoadenosine 5'-phosphosulfate reductase (244 aa).

Cys-239 acts as the Nucleophile; cysteine thiosulfonate intermediate in catalysis.

It belongs to the PAPS reductase family. CysH subfamily.

Its subcellular location is the cytoplasm. It carries out the reaction [thioredoxin]-disulfide + sulfite + adenosine 3',5'-bisphosphate + 2 H(+) = [thioredoxin]-dithiol + 3'-phosphoadenylyl sulfate. It functions in the pathway sulfur metabolism; hydrogen sulfide biosynthesis; sulfite from sulfate: step 3/3. Functionally, catalyzes the formation of sulfite from phosphoadenosine 5'-phosphosulfate (PAPS) using thioredoxin as an electron donor. This is Phosphoadenosine 5'-phosphosulfate reductase from Salmonella choleraesuis (strain SC-B67).